The primary structure comprises 184 residues: Putative DNA-directed RNA polymerase subunit 454R (184 aa).

This sequence belongs to the archaeal Rpo5/eukaryotic RPB5 RNA polymerase subunit family.

Functionally, component of the DNA-dependent RNA polymerase that catalyzes the transcription in the cytoplasm of viral DNA into RNA using the four ribonucleoside triphosphates as substrates. The polypeptide is Putative DNA-directed RNA polymerase subunit 454R (Invertebrate iridescent virus 6 (IIV-6)).